A 382-amino-acid polypeptide reads, in one-letter code: Inactive ubiquitin-specific protease 5 (382 aa).

Positions 16–141 constitute a DUSP domain; sequence VPAEEERALI…GGPTLPRKAI (126 aa). The USP domain occupies 323-382; that stretch reads TGLLNLGNTCFMNSAIQCLVHTPEFARYFREDYHREINWQNPLGMVVSTLSTSMALKPYV.

Belongs to the peptidase C19 family. Widely expressed with the highest expression in floral organs.

It is found in the cell membrane. Functionally, plays an important role in the development of floral organs and chloroplasts. Does not possess deubiquitinating enzyme activity in vitro. This is Inactive ubiquitin-specific protease 5 from Oryza sativa subsp. japonica (Rice).